The following is a 95-amino-acid chain: Nickel and cobalt resistance protein CnrY (95 aa).

Over 1 to 45 (MADVEEWLTHARKVTQEASIGVDVTSIQECISAEPAQRVLVARRD) the chain is Cytoplasmic. The chain crosses the membrane as a helical span at residues 46-68 (AWRAICCAAFAALVAFAAINRVA). Topologically, residues 69 to 95 (TIMLEKPAPTWVATPSAASPFGLLIGK) are periplasmic.

To A.xylosoxydans NccY.

It localises to the cell inner membrane. In terms of biological role, nickel and cobalt resistance proteins CnrA, CnrB, CnrC CnrH and CnrR may be involved in the regulation of CNR. Its function is as follows. CnrH alone is able to activate cnr expression, and both CnrY and CrnX are needed for nickel induction of CnrH. In the absence of wild-type CnrY (due either to a frameshift, PubMed:10671463 or absence of the transcript, PubMed:10671464), nickel and cobalt resistance is constitutive, indicating that CrnY may act as a repressor or an anti-sigma factor. The polypeptide is Nickel and cobalt resistance protein CnrY (cnrY) (Cupriavidus metallidurans (strain ATCC 43123 / DSM 2839 / NBRC 102507 / CH34) (Ralstonia metallidurans)).